The primary structure comprises 88 residues: Small ribosomal subunit protein uS15 (88 aa).

The span at 1–12 (MITQEEQQKIID) shows a compositional bias: basic and acidic residues. Positions 1–24 (MITQEEQQKIIDRFGNGPNDTGTP) are disordered.

It belongs to the universal ribosomal protein uS15 family. In terms of assembly, part of the 30S ribosomal subunit. Forms a bridge to the 50S subunit in the 70S ribosome, contacting the 23S rRNA.

In terms of biological role, one of the primary rRNA binding proteins, it binds directly to 16S rRNA where it helps nucleate assembly of the platform of the 30S subunit by binding and bridging several RNA helices of the 16S rRNA. Functionally, forms an intersubunit bridge (bridge B4) with the 23S rRNA of the 50S subunit in the ribosome. This is Small ribosomal subunit protein uS15 from Salinibacter ruber (strain DSM 13855 / M31).